A 362-amino-acid chain; its full sequence is Probable dual-specificity RNA methyltransferase RlmN (362 aa).

E105 functions as the Proton acceptor in the catalytic mechanism. The region spanning 111–344 is the Radical SAM core domain; sequence HEYGNSICVT…VTIRREQGHD (234 aa). Residues C118 and C349 are joined by a disulfide bond. C125, C129, and C132 together coordinate [4Fe-4S] cluster. Residues 175-176, S207, 230-232, and N306 each bind S-adenosyl-L-methionine; these read GE and SLH. Catalysis depends on C349, which acts as the S-methylcysteine intermediate.

It belongs to the radical SAM superfamily. RlmN family. Requires [4Fe-4S] cluster as cofactor.

The protein localises to the cytoplasm. It carries out the reaction adenosine(2503) in 23S rRNA + 2 reduced [2Fe-2S]-[ferredoxin] + 2 S-adenosyl-L-methionine = 2-methyladenosine(2503) in 23S rRNA + 5'-deoxyadenosine + L-methionine + 2 oxidized [2Fe-2S]-[ferredoxin] + S-adenosyl-L-homocysteine. It catalyses the reaction adenosine(37) in tRNA + 2 reduced [2Fe-2S]-[ferredoxin] + 2 S-adenosyl-L-methionine = 2-methyladenosine(37) in tRNA + 5'-deoxyadenosine + L-methionine + 2 oxidized [2Fe-2S]-[ferredoxin] + S-adenosyl-L-homocysteine. Specifically methylates position 2 of adenine 2503 in 23S rRNA and position 2 of adenine 37 in tRNAs. The protein is Probable dual-specificity RNA methyltransferase RlmN of Bacillus cereus (strain B4264).